Here is a 129-residue protein sequence, read N- to C-terminus: Glycine cleavage system H protein (129 aa).

Residues 24 to 106 (AVRIGLSAYA…HGEGWLLVIQ (83 aa)) enclose the Lipoyl-binding domain. The residue at position 65 (lysine 65) is an N6-lipoyllysine.

It belongs to the GcvH family. In terms of assembly, the glycine cleavage system is composed of four proteins: P, T, L and H. The cofactor is (R)-lipoate.

In terms of biological role, the glycine cleavage system catalyzes the degradation of glycine. The H protein shuttles the methylamine group of glycine from the P protein to the T protein. The sequence is that of Glycine cleavage system H protein from Synechococcus sp. (strain WH7803).